Reading from the N-terminus, the 397-residue chain is Ribosomal RNA large subunit methyltransferase I (397 aa).

A PUA domain is found at 2-80; sequence SAAIYLVKGR…QDINRAFFVK (79 aa).

The protein belongs to the methyltransferase superfamily. RlmI family.

Its subcellular location is the cytoplasm. It carries out the reaction cytidine(1962) in 23S rRNA + S-adenosyl-L-methionine = 5-methylcytidine(1962) in 23S rRNA + S-adenosyl-L-homocysteine + H(+). Its function is as follows. Specifically methylates the cytosine at position 1962 (m5C1962) of 23S rRNA. This is Ribosomal RNA large subunit methyltransferase I from Vibrio vulnificus (strain CMCP6).